We begin with the raw amino-acid sequence, 444 residues long: MLQCAPKKNERLRGSCDFCTQSKLRCNKNKPSCRRCTIQQQPCVYSVARRTGRPPKHPRKANDCQEANGQHGEQDPVTSTPGGSCQQQSNHLLDVEGDGANFTLADASTTAQGRETAASSALDNALLVGETFGFSSLLDDPLIQSDDFLSFSLCMPPGEEEGHMASPRALNGSTGPCSPTVLSSIDVPHLPARFGFLESSVESGLHGRTGPHLVEQPDKIVPSSFSEMEKIYDEGLTFSGLDSAINAVTNNGKGEPSASGTMAAHPHSKRQCFCSTSMSKLQMLISHPTLCQKNSRARFDMTLFLEEVVFNIHRDVLQCLVCQSKSLHSLASLCICTDWVIEALRDVAQDLSSGQDNLGGFRAGLCPPKDKFSICVGRFVLDDQLRESCTRSLVKYRLRKLVPIMDTMMKLNYRGAGGALSQAIRTMVEDVRHKIESALGMMEL.

Residues 16–43 constitute a DNA-binding region (zn(2)-C6 fungal-type); that stretch reads CDFCTQSKLRCNKNKPSCRRCTIQQQPC. The interval 49-87 is disordered; the sequence is RRTGRPPKHPRKANDCQEANGQHGEQDPVTSTPGGSCQQ. Residues 50–59 show a composition bias toward basic residues; the sequence is RTGRPPKHPR. A compositionally biased stretch (polar residues) spans 76–87; sequence PVTSTPGGSCQQ.

Its subcellular location is the nucleus. Its function is as follows. Transcription factor that regulates the expression of the gene clusters that mediate the biosynthesis of the host-selective toxins (HSTs) AK-toxins responsible for Japanese pear black spot disease by the Japanese pear pathotype. AK-toxins are esters of 9,10-epoxy 8-hydroxy 9-methyldecatrienoic acid (EDA). On cellular level, AK-toxins affect plasma membrane of susceptible cells and cause a sudden increase in loss of K(+) after a few minutes of toxin treatment. The protein is Transcription activator AKTR-1 of Alternaria alternata (Alternaria rot fungus).